Consider the following 364-residue polypeptide: DNA replication and repair protein RecF (364 aa).

30–37 serves as a coordination point for ATP; the sequence is GENGSGKT.

The protein belongs to the RecF family.

It is found in the cytoplasm. In terms of biological role, the RecF protein is involved in DNA metabolism; it is required for DNA replication and normal SOS inducibility. RecF binds preferentially to single-stranded, linear DNA. It also seems to bind ATP. In Pseudoalteromonas translucida (strain TAC 125), this protein is DNA replication and repair protein RecF.